Reading from the N-terminus, the 188-residue chain is ATP-dependent protease subunit HslV (188 aa).

Residue threonine 14 is part of the active site. The Na(+) site is built by alanine 173, cysteine 176, and threonine 179.

The protein belongs to the peptidase T1B family. HslV subfamily. In terms of assembly, a double ring-shaped homohexamer of HslV is capped on each side by a ring-shaped HslU homohexamer. The assembly of the HslU/HslV complex is dependent on binding of ATP.

Its subcellular location is the cytoplasm. It catalyses the reaction ATP-dependent cleavage of peptide bonds with broad specificity.. Its activity is regulated as follows. Allosterically activated by HslU binding. Protease subunit of a proteasome-like degradation complex believed to be a general protein degrading machinery. The protein is ATP-dependent protease subunit HslV of Caulobacter vibrioides (strain ATCC 19089 / CIP 103742 / CB 15) (Caulobacter crescentus).